The primary structure comprises 283 residues: Bifunctional protein FolD (283 aa).

Residues G166–S168 and I232 each bind NADP(+).

It belongs to the tetrahydrofolate dehydrogenase/cyclohydrolase family. As to quaternary structure, homodimer.

The enzyme catalyses (6R)-5,10-methylene-5,6,7,8-tetrahydrofolate + NADP(+) = (6R)-5,10-methenyltetrahydrofolate + NADPH. It catalyses the reaction (6R)-5,10-methenyltetrahydrofolate + H2O = (6R)-10-formyltetrahydrofolate + H(+). The protein operates within one-carbon metabolism; tetrahydrofolate interconversion. In terms of biological role, catalyzes the oxidation of 5,10-methylenetetrahydrofolate to 5,10-methenyltetrahydrofolate and then the hydrolysis of 5,10-methenyltetrahydrofolate to 10-formyltetrahydrofolate. This chain is Bifunctional protein FolD, found in Wigglesworthia glossinidia brevipalpis.